A 488-amino-acid chain; its full sequence is UDP-glycosyltransferase 92A1 (488 aa).

UDP-alpha-D-glucose-binding positions include Ser-292, Ala-358–Gln-360, His-375–Glu-383, and Ala-397–Gln-400.

The protein belongs to the UDP-glycosyltransferase family.

In Arabidopsis thaliana (Mouse-ear cress), this protein is UDP-glycosyltransferase 92A1 (UGT92A1).